The primary structure comprises 705 residues: Fatty acid oxidation complex subunit alpha (705 aa).

Residues 1-190 form an enoyl-CoA hydratase region; sequence MSEQKAFNLK…KLGVVDACVP (190 aa). Residues 308–705 are 3-hydroxyacyl-CoA dehydrogenase; it reads SKVGMVGVLG…AGEGRRFYDN (398 aa).

The protein in the N-terminal section; belongs to the enoyl-CoA hydratase/isomerase family. It in the central section; belongs to the 3-hydroxyacyl-CoA dehydrogenase family. In terms of assembly, heterotetramer of two alpha chains (FadJ) and two beta chains (FadI).

It localises to the cytoplasm. It catalyses the reaction a (3S)-3-hydroxyacyl-CoA = a (2E)-enoyl-CoA + H2O. It carries out the reaction a 4-saturated-(3S)-3-hydroxyacyl-CoA = a (3E)-enoyl-CoA + H2O. The enzyme catalyses a (3S)-3-hydroxyacyl-CoA + NAD(+) = a 3-oxoacyl-CoA + NADH + H(+). The catalysed reaction is (3S)-3-hydroxybutanoyl-CoA = (3R)-3-hydroxybutanoyl-CoA. Its pathway is lipid metabolism; fatty acid beta-oxidation. Functionally, catalyzes the formation of a hydroxyacyl-CoA by addition of water on enoyl-CoA. Also exhibits 3-hydroxyacyl-CoA epimerase and 3-hydroxyacyl-CoA dehydrogenase activities. This chain is Fatty acid oxidation complex subunit alpha, found in Vibrio vulnificus (strain CMCP6).